The chain runs to 90 residues: MAHKKAGGSSRNGRDSAGKRLGVKAFGGEHVIPGNIIARQRGTQWHPGLNVGMGTDHTLFAKVEGRVEFRAKANGRTYVSVLPIAMQAAE.

Positions 1-20 (MAHKKAGGSSRNGRDSAGKR) are disordered.

This sequence belongs to the bacterial ribosomal protein bL27 family.

The chain is Large ribosomal subunit protein bL27 from Rhodopseudomonas palustris (strain ATCC BAA-98 / CGA009).